The chain runs to 1146 residues: Reverse gyrase 1 (1146 aa).

The segment at 1–38 adopts an RG N-terminal-type zinc-finger fold; that stretch reads MIKAIFDTLCPNCGGEISAERLLKGLPCEKCLPEEVNR. Positions 10, 13, 28, and 31 each coordinate Zn(2+). ATP-binding positions include glutamine 79 and 96–103; that span reads APTGVGKT. The region spanning 83–240 is the Helicase ATP-binding domain; that stretch reads ARKVFLGRSF…RLKEKPNKSE (158 aa). Positions 197-200 match the DEAD box motif; that stretch reads DDVD. The 154-residue stretch at 412–565 folds into the Helicase C-terminal domain; the sequence is HLLWALLSLR…FKKIEEVDLK (154 aa). Positions 592–1146 are topoisomerase I; the sequence is EHVKPVLVVV…KVNEFEKANV (555 aa). One can recognise a Toprim domain in the interval 596 to 728; it reads PVLVVVESPN…NVERIEFHEV (133 aa). The Mg(2+) site is built by glutamate 602 and aspartate 697. Positions 744–1142 constitute a Topo IA-type catalytic domain; sequence NENLVKAQLV…ELYKKVNEFE (399 aa). The O-(5'-phospho-DNA)-tyrosine intermediate role is filled by tyrosine 891.

It in the N-terminal section; belongs to the DEAD box helicase family. DDVD subfamily. This sequence in the C-terminal section; belongs to the type IA topoisomerase family. As to quaternary structure, monomer. Zn(2+) serves as cofactor. Requires Mg(2+) as cofactor.

Its subcellular location is the cytoplasm. The catalysed reaction is ATP + H2O = ADP + phosphate + H(+). Its function is as follows. Modifies the topological state of DNA by introducing positive supercoils in an ATP-dependent process, increasing the linking number in steps of +1. Binds to single-stranded DNA, transiently cleaves and then rejoins the ends, introducing a positive supercoil in the process. The scissile phosphodiester is attacked by the catalytic tyrosine of the enzyme, resulting in the formation of a DNA-(5'-phosphotyrosyl)-enzyme intermediate. Probably involved in rewinding DNA strands in regions of the chromosome that have opened up to allow replication, transcription, DNA repair and/or for DNA protection. This chain is Reverse gyrase 1, found in Aquifex aeolicus (strain VF5).